The primary structure comprises 418 residues: uncharacterized protein (418 aa).

Positions 1–24 (MSGTAGFITVSPGPPTEAPGGFPR) are disordered.

This sequence to A.pernix APE_1276 and S.solfataricus SSO2105.

This is an uncharacterized protein from Aeropyrum pernix (strain ATCC 700893 / DSM 11879 / JCM 9820 / NBRC 100138 / K1).